We begin with the raw amino-acid sequence, 373 residues long: MPGWSCLVTGAGGFLGQRIIQLLVQEKDLEEIRVLDKVFKPETREQFFNLGTSIKVTVLEGDILDTQYLRRACQGISVVIHTAAIIDVTGVIPRQTILDVNLKGTQNLLEACIQASVPAFIFSSSVDVAGPNSYKDIVLNGHEDEHRESTWSDPYPYSKKMAEKAVLAANGSMLKNGGTLQTCALRPMCIYGERSQFLSNTIIKALKNKFILRGGGKFSTANPVYVGNVAWAHILAARGLRNPKKSPNIQGEFYYISDDTPHQSYDDLNYTLSKEWGFCLNSRWYLPVPILYWLAFLLETVSFLLSPIYRYIPPFNRHLVTLTASTFTFSYKKAQRDLGYEPLVSWEEAKQKTSEWIGTLVEQHRETLDTKSQ.

Catalysis depends on Tyr155, which acts as the Proton acceptor. Lys159 contributes to the NAD(+) binding site. A helical membrane pass occupies residues 288–308 (VPILYWLAFLLETVSFLLSPI).

Belongs to the 3-beta-HSD family. As to expression, liver and kidney. Greater expression in liver.

Its subcellular location is the endoplasmic reticulum membrane. It localises to the mitochondrion membrane. The catalysed reaction is a 3beta-hydroxy-Delta(5)-steroid + NAD(+) = a 3-oxo-Delta(5)-steroid + NADH + H(+). It carries out the reaction a 3-oxo-Delta(5)-steroid = a 3-oxo-Delta(4)-steroid. It participates in lipid metabolism; steroid biosynthesis. Its function is as follows. 3-beta-HSD is a bifunctional enzyme, that catalyzes the oxidative conversion of Delta(5)-ene-3-beta-hydroxy steroid, and the oxidative conversion of ketosteroids. The 3-beta-HSD enzymatic system plays a crucial role in the biosynthesis of all classes of hormonal steroids. This chain is 3 beta-hydroxysteroid dehydrogenase/Delta 5--&gt;4-isomerase type 3 (Hsd3b3), found in Mus musculus (Mouse).